The primary structure comprises 45 residues: Bomanin Short 2 (45 aa).

Positions 1-20 are cleaved as a signal peptide; it reads MKFFSVVTVFVFGLLALANA. Positions 21–27 are cleaved as a propeptide — removed by a dipeptidylpeptidase; the sequence is VPLSPDP. An intrachain disulfide couples Cys36 to Cys39. Gly43 carries the post-translational modification Glycine amide.

As to expression, hemolymph (at protein level).

It is found in the secreted. Its function is as follows. Secreted immune-induced peptide induced by Toll signaling. Has a role in resistance to bacterial and fungal infections. The protein is Bomanin Short 2 of Drosophila melanogaster (Fruit fly).